Here is a 454-residue protein sequence, read N- to C-terminus: Probable ECA polymerase (454 aa).

Transmembrane regions (helical) follow at residues 6-26 (FSGL…LTWF), 37-57 (VFFS…TSIL), 63-83 (VAVV…CFYA), 122-142 (MMAV…FLLF), 157-177 (GVAL…VYFL), 183-203 (AWLF…MIVG), 209-229 (IIIA…ISPG), 230-250 (MLAA…LKRY), 343-363 (LVVM…GLII), 380-400 (YKAA…IVLA), and 411-431 (VIFF…IYWL).

Belongs to the WzyE family. As to quaternary structure, probably part of a complex composed of WzxE, WzyE and WzzE.

Its subcellular location is the cell inner membrane. It participates in bacterial outer membrane biogenesis; enterobacterial common antigen biosynthesis. Functionally, probably involved in the polymerization of enterobacterial common antigen (ECA) trisaccharide repeat units. This chain is Probable ECA polymerase, found in Cronobacter sakazakii (strain ATCC BAA-894) (Enterobacter sakazakii).